The primary structure comprises 944 residues: Translation initiation factor IF-2 (944 aa).

The segment covering 55-81 has biased composition (low complexity); the sequence is LTGQAAAPAAAPSSAPRPGARSSAPKP. The interval 55 to 329 is disordered; it reads LTGQAAAPAA…RTKRAEFELR (275 aa). Over residues 82-92 the composition is skewed to pro residues; it reads GGRPTPGPQPT. Over residues 93–107 the composition is skewed to low complexity; the sequence is AAPEVEAPEASDVPV. A compositionally biased stretch (basic and acidic residues) spans 123–135; the sequence is ASRKAAAEEKAQA. Composition is skewed to low complexity over residues 136 to 153 and 211 to 222; these read EKSA…ETPS and GQRPAAGAAGPR. Positions 223–236 are enriched in pro residues; it reads PAAPRPGSPRPGAP. Positions 244–257 are enriched in low complexity; the sequence is GARPAGFGQRPAGA. A compositionally biased stretch (gly residues) spans 258 to 269; that stretch reads GRPGGAPGGAGR. Residues 270–283 show a composition bias toward low complexity; the sequence is PGAPAAGGFQRPAG. Positions 284 to 310 are enriched in gly residues; it reads GFAGRPGGGGRGRGPGGGTAGAFGRGG. The span at 311–322 shows a compositional bias: basic residues; it reads GKSKSRKSKRTK. Positions 437-611 constitute a tr-type G domain; that stretch reads IRPPVVTVMG…LTADAGLDLR (175 aa). The segment at 446–453 is G1; that stretch reads GHVDHGKT. Position 446-453 (446-453) interacts with GTP; it reads GHVDHGKT. A G2 region spans residues 471 to 475; sequence GITQH. The tract at residues 496–499 is G3; sequence DTPG. Residues 496–500 and 550–553 contribute to the GTP site; these read DTPGH and NKVD. The interval 550 to 553 is G4; sequence NKVD. Positions 586–588 are G5; it reads SAL.

It belongs to the TRAFAC class translation factor GTPase superfamily. Classic translation factor GTPase family. IF-2 subfamily.

The protein localises to the cytoplasm. Its function is as follows. One of the essential components for the initiation of protein synthesis. Protects formylmethionyl-tRNA from spontaneous hydrolysis and promotes its binding to the 30S ribosomal subunits. Also involved in the hydrolysis of GTP during the formation of the 70S ribosomal complex. This chain is Translation initiation factor IF-2, found in Clavibacter michiganensis subsp. michiganensis (strain NCPPB 382).